Here is a 140-residue protein sequence, read N- to C-terminus: Pro-Viral epidermal growth factor (140 aa).

Residues 1–18 (MSMKYLMLLFAAMIIRSF) form the signal peptide. The Extracellular segment spans residues 19-100 (ADSGNAIETT…SENPNTTTSY (82 aa)). Asn34 carries N-linked (GlcNAc...) asparagine; by host glycosylation. The region spanning 41–81 (AIRLCGPEGDGYCLHGDCIHARDIDGMYCRCSHGYTGIRCQ) is the EGF-like domain. 3 disulfide bridges follow: Cys45/Cys58, Cys53/Cys69, and Cys71/Cys80. Asn95 is a glycosylation site (N-linked (GlcNAc...) asparagine; by host). Residues 101–121 (IPSPGIMLVLVGIIIITCCLL) traverse the membrane as a helical segment. Residues 122-140 (SVYRFTRRTKLPIQDMVVP) are Cytoplasmic-facing.

This sequence belongs to the orthopoxvirus OPG019 family. In terms of assembly, viral epidermal growth factor interacts with host EGFR and promotes EGFR dimerization. Cleaved at the cell surface by host ADAM10, thereby releasing the secreted form of VGF.

It is found in the host membrane. The protein localises to the secreted. In terms of biological role, stimulates cellular proliferation (hyperplasia)and mobility around infected cells to promote rapid and efficient spread of infection. This effect is beneficial for virus replication in vivo, because poxviruses replicate possibly better in proliferating cells than in quiescent cells. Acts by binding host EGFR, inducing its dimerization, autophosphorylation and leading to activation of several cellular pathways regulating cell proliferation or cell survival. The activation by host EGFR of mitogen activated protein kinases (MAPK) and extracellular-signal regulated kinases (ERK) are essential for the positive effect of vaccinia growth factor on poxvirus virulence in vivo. The polypeptide is Pro-Viral epidermal growth factor (OPG019) (Bos taurus (Bovine)).